Reading from the N-terminus, the 208-residue chain is Large ribosomal subunit protein uL4 (208 aa).

Positions 49–78 (KAKGISDISGTTAKPYRQKHTGRARQGSLR) are disordered.

It belongs to the universal ribosomal protein uL4 family. In terms of assembly, part of the 50S ribosomal subunit.

Functionally, one of the primary rRNA binding proteins, this protein initially binds near the 5'-end of the 23S rRNA. It is important during the early stages of 50S assembly. It makes multiple contacts with different domains of the 23S rRNA in the assembled 50S subunit and ribosome. Its function is as follows. Forms part of the polypeptide exit tunnel. This is Large ribosomal subunit protein uL4 from Anaplasma phagocytophilum (strain HZ).